The following is a 344-amino-acid chain: Follistatin (344 aa).

The signal sequence occupies residues 1 to 29 (MVCARHQPGGLCLLLLLLCQFMEDRSAQA). The TB domain occupies 30–103 (GNCWLRQAKN…TCENVDCGPG (74 aa)). Disulfide bonds link Cys-32/Cys-55, Cys-42/Cys-88, Cys-56/Cys-91, Cys-95/Cys-106, Cys-100/Cys-116, Cys-118/Cys-150, Cys-122/Cys-143, Cys-132/Cys-164, Cys-168/Cys-179, Cys-173/Cys-189, Cys-192/Cys-225, Cys-196/Cys-218, Cys-207/Cys-239, Cys-245/Cys-256, Cys-250/Cys-267, Cys-270/Cys-302, Cys-274/Cys-295, and Cys-284/Cys-316. Residues 94–117 (TCENVDCGPGKKCRMNKKNKPRCV) enclose the Follistatin-like 1 domain. Residues 112 to 166 (NKPRCVCAPDCSNITWKGPVCGLDGKTYRNECALLKARCKEQPELEVQYQGKCKK) enclose the Kazal-like 1 domain. Asn-124 is a glycosylation site (N-linked (GlcNAc...) asparagine). Residues 167 to 190 (TCRDVFCPGSSTCVVDQTNNAYCV) enclose the Follistatin-like 2 domain. The Kazal-like 2 domain maps to 186 to 241 (NAYCVTCNRICPEPSSSEQSLCGNDGVTYSSACHLRKATCLLGRSIGLAYEGKCIK). Residues 244 to 268 (SCEDIQCGGGKKCLWDFKVGRGRCS) enclose the Follistatin-like 3 domain. Positions 264–318 (RGRCSLCDELCPDSKSDEPVCASDNATYASECAMKEAACSSGVLLEVKHSGSCNS) constitute a Kazal-like 3 domain. N-linked (GlcNAc...) asparagine glycosylation occurs at Asn-288. Positions 315 to 344 (SCNSISEETEEEEEEEDQDYSFPISSTLEW) are disordered. Residues 321-333 (EETEEEEEEEDQD) show a composition bias toward acidic residues.

As to quaternary structure, interacts with GDF11. Interacts with activin A/INHBA. Interacts with myostatin/MSTN.

The protein localises to the secreted. Its subcellular location is the nucleus. It is found in the nucleolus. In terms of biological role, multifunctional regulatory protein whose primary function is to antagonize members of the transforming growth factor beta (TGF-beta) superfamily including activin, myostatin, GDF11 or bone morphogenetic proteins (BMPs). Mechanistically, binds to these ligands in the extracellular space, blocking their type II receptor-binding site to inhibit downstream signaling. Plays an essential role in muscle fiber formation and growth both by preventing the repressive effects of myostatin and through SMAD3/AKT/mTOR signaling independently of myostatin. Also promotes neural differentiation by antagonizing the action BMP4. Acts as a specific inhibitor of the biosynthesis and secretion of pituitary follicle stimulating hormone (FSH) by sequestering activin A/INHBA. On the other hand, translocates into the nucleus where it down-regulates rRNA synthesis and ribosome biogenesis to maintain cellular energy homeostasis by binding to rDNA. The polypeptide is Follistatin (Rattus norvegicus (Rat)).